Consider the following 198-residue polypeptide: Nucleoplasmin (198 aa).

The acidic tract A1 stretch occupies residues S35–D38. Residues S125–E145 are compositionally biased toward acidic residues. Residues S125–K198 form a disordered region. The acidic tract A2 stretch occupies residues E128–E145. The span at A150–K167 shows a compositional bias: basic residues. The Bipartite nuclear localization signal motif lies at K152–K167. Residues E172–E174 are acidic tract A3. The span at K183–K198 shows a compositional bias: basic residues.

The protein belongs to the nucleoplasmin family. Homopentamer. In terms of tissue distribution, expressed in oocytes.

It localises to the nucleus. Its function is as follows. Acts as a chaperone for histones, such as histone H2A-H2B, and thus regulates the assembly of nucleosome cores. Involved in chromatin remodeling, especially during fertilization and early embryonic development. May be involved in sperm chromatin decondensation during fertilization. This chain is Nucleoplasmin, found in Rhinella marina (Cane toad).